A 119-amino-acid polypeptide reads, in one-letter code: Large ribosomal subunit protein bL20 (119 aa).

Belongs to the bacterial ribosomal protein bL20 family.

Functionally, binds directly to 23S ribosomal RNA and is necessary for the in vitro assembly process of the 50S ribosomal subunit. It is not involved in the protein synthesizing functions of that subunit. This Laribacter hongkongensis (strain HLHK9) protein is Large ribosomal subunit protein bL20.